The following is a 310-amino-acid chain: Capsid assembly scaffolding protein (310 aa).

Positions Val-46–Gly-102 are disordered. Positions Asp-83–Gly-102 are enriched in acidic residues.

Belongs to the T7likevirus capsid assembly scaffolding protein family.

Its function is as follows. Scaffolding protein involved in the icosahedric procapsid assembly. Coassembles with the capsid proteins to form the procapsid, in which the scaffolding protein is found within the external shell of icosahedrally arranged capsid protein subunits. In a subsequent step the scaffolding protein molecules are released from the procapsid. Facilitates assembly by binding to gp10 hexamers but not the pentamers and locking them into a morphogenically correct conformation. In Enterobacteria phage T3 (Bacteriophage T3), this protein is Capsid assembly scaffolding protein (9).